Reading from the N-terminus, the 623-residue chain is Immunity-related GTPase family Q protein (623 aa).

Cysteine 152 and cysteine 158 are joined by a disulfide. Positions 155–180 form a coiled coil; the sequence is SDGCEELERLRAALQSQAEALRRLLP. The LIR 1 motif lies at 186 to 189; it reads FEVL. The residue at position 203 (threonine 203) is a Phosphothreonine. The 227-residue stretch at 223–449 folds into the IRG-type G domain; it reads ARLDLAVAGK…PGLCEWLRRA (227 aa). A disordered region spans residues 334–393; the sequence is EGEDPECLGEGKMENPKGESLKNAGGGGLENALSKGREKCSAGSQKAGSGEGPGKAGSEG. Basic and acidic residues predominate over residues 342–353; it reads GEGKMENPKGES. The short motif at 421–424 is the LIR 2 element; sequence WEVL.

It belongs to the TRAFAC class dynamin-like GTPase superfamily. IRG family. In terms of assembly, interacts (via LIR motif 1) with GABARAPL2. Interacts (via LIR motif 2) with MAP1LC3B/LC3B.

The protein resides in the lysosome. The protein localises to the cytoplasmic vesicle. It localises to the autophagosome. Autophagy receptor that specifically promotes clearance of misfolded MHC class I molecules by targeting them to the lysosome for degradation. Acts as a molecular adapter that specifically recognizes and binds (1) misfolded MHC class I molecules following their ubiquitination, as well as (2) autophagy-related proteins, promoting the recruitment of misfolded MHC class I molecules to autophagy machinery for degradation. Degradation of misfolded MHC class I molecules is essential to prevent accumulation of defective MHC class I complexes at the surface of CD8(+) T-cells and prevent a stronger T-cell-mediated response. In contrast to other members of the family, does not show GTPase activity. The chain is Immunity-related GTPase family Q protein from Homo sapiens (Human).